We begin with the raw amino-acid sequence, 324 residues long: Pseudouridylate synthase RPUSD4, mitochondrial (324 aa).

The N-terminal 11 residues, 1-11 (MAAAGGGATRG), are a transit peptide targeting the mitochondrion. Residue Asp105 is part of the active site.

Belongs to the pseudouridine synthase RluA family.

The protein resides in the mitochondrion matrix. Its subcellular location is the nucleus. The protein localises to the cytoplasm. It catalyses the reaction uridine in 5S rRNA = pseudouridine in 5S rRNA. It carries out the reaction a uridine in tRNA = a pseudouridine in tRNA. The catalysed reaction is a uridine in mRNA = a pseudouridine in mRNA. In terms of biological role, catalyzes uridine to pseudouridine isomerization (pseudouridylation) of different mitochondrial RNA substrates. Acts on position 1397 in 16S mitochondrial ribosomal RNA (16S mt-rRNA). This modification is required for the assembly of 16S mt-rRNA into a functional mitochondrial ribosome. Acts on position 39 in mitochondrial tRNA(Phe). Also catalyzes pseudouridylation of mRNAs in nucleus: acts as a regulator of pre-mRNA splicing by mediating pseudouridylation of pre-mRNAs at locations associated with alternatively spliced regions. Pseudouridylation of pre-mRNAs near splice sites directly regulates mRNA splicing and mRNA 3'-end processing. This is Pseudouridylate synthase RPUSD4, mitochondrial from Xenopus tropicalis (Western clawed frog).